Here is a 151-residue protein sequence, read N- to C-terminus: Putative membrane protein ORF10 (151 aa).

The next 2 helical transmembrane spans lie at 7–23 (LCLA…GVVV) and 107–123 (GLVA…IIMY).

The protein resides in the membrane. In Ictalurid herpesvirus 1 (strain Auburn) (IcHV-1), this protein is Putative membrane protein ORF10 (ORF10).